The sequence spans 171 residues: Synaptonemal complex central element protein 2 (171 aa).

A disordered region spans residues 1-52 (MERHGVAAPPVELKDQEPPAIVESGEHRQSENHEETPGSVAPSASCQLPGPF). The span at 24 to 36 (SGEHRQSENHEET) shows a compositional bias: basic and acidic residues. 2 coiled-coil regions span residues 52–83 (FSSL…DHAL) and 118–146 (QERL…QTVE).

This sequence belongs to the SYCE family. Homodimer. Found in a complex with SYCP1 and SYCE1. Interacts with SYCP1 and SYCE1. Interacts with SYCE3. Interacts with TEX12. In terms of tissue distribution, meiotic cells (at protein level). Expressed in the ovary and testis.

It is found in the nucleus. The protein localises to the chromosome. Functionally, major component of the transverse central element of synaptonemal complexes (SCS), formed between homologous chromosomes during meiotic prophase. Requires SYCP1 in order to be incorporated into the central element. May have a role in the synaptonemal complex assembly, stabilization and recombination. This chain is Synaptonemal complex central element protein 2 (Syce2), found in Mus musculus (Mouse).